Here is a 165-residue protein sequence, read N- to C-terminus: Ubiquitin-fold modifier-conjugating enzyme 1 (165 aa).

Cysteine 117 serves as the catalytic Glycyl thioester intermediate.

This sequence belongs to the ubiquitin-conjugating enzyme family. UFC1 subfamily.

E2-like enzyme which forms an intermediate with UFM1 via a thioester linkage. The protein is Ubiquitin-fold modifier-conjugating enzyme 1 of Brugia malayi (Filarial nematode worm).